The chain runs to 972 residues: Structural polyprotein (972 aa).

Asp-26 lines the a divalent metal cation pocket. One can recognise a Peptidase S50 domain in the interval 509–734 (SGGPDGKFSR…YLGELMASNA (226 aa)). Ser-633 functions as the Nucleophile in the catalytic mechanism. Lys-674 is a catalytic residue. Disordered stretches follow at residues 794-817 (KLIS…AQEA) and 916-972 (NGGR…NAEV). Over residues 801-817 (KHPEKPKGPDQHHAQEA) the composition is skewed to basic and acidic residues. A compositionally biased stretch (polar residues) spans 963 to 972 (FTPSGDNAEV).

As to quaternary structure, homotrimer. A central divalent metal (possibly cobalt) stabilizes the VP2 trimer. Homodimer. interacts (via C-terminus) with VP1 in the cytoplasm. Interacts with VP2. Specific enzymatic cleavages yield mature proteins. The capsid assembly seems to be regulated by polyprotein processing. The protease VP4 cleaves itself off the polyprotein, thus releasing pre-VP2 and VP3 within the infected cell. During capsid assembly, the C-terminus of pre-VP2 is further processed by VP4, giving rise to VP2, the external capsid protein and three small peptides that all stay closely associated with the capsid.

Its subcellular location is the virion. The protein localises to the host cytoplasm. Its function is as follows. Capsid protein VP2 self assembles to form an icosahedral capsid with a T=13 symmetry, about 70 nm in diameter, and consisting of 260 VP2 trimers. The capsid encapsulates the genomic dsRNA. VP2 is also involved in attachment and entry into the host cell. The precursor of VP2 plays an important role in capsid assembly. First, pre-VP2 and VP2 oligomers assemble to form a procapsid. Then, the pre-VP2 intermediates may be processed into VP2 proteins by proteolytic cleavage mediated by VP4 to obtain the mature virion. The final capsid is composed of pentamers and hexamers but VP2 has a natural tendency to assemble into all-pentameric structures. Therefore pre-VP2 may be required to allow formation of the hexameric structures. In terms of biological role, protease VP4 is a serine protease that cleaves the polyprotein into its final products. Pre-VP2 is first partially cleaved, and may be completely processed by VP4 upon capsid maturation. Functionally, capsid protein VP3 plays a key role in virion assembly by providing a scaffold for the capsid made of VP2. May self-assemble to form a T=4-like icosahedral inner-capsid composed of at least 180 trimers. Plays a role in genomic RNA packaging by recruiting VP1 into the capsid and interacting with the dsRNA genome segments to form a ribonucleoprotein complex. Additionally, the interaction of the VP3 C-terminal tail with VP1 removes the inherent structural blockade of the polymerase active site. Thus, VP3 can also function as a transcriptional activator. Its function is as follows. Structural peptide 1 is a small peptide derived from pre-VP2 C-terminus. It destabilizes and perforates cell membranes, suggesting a role during entry. Structural peptide 2 is a small peptide derived from pVP2 C-terminus. It is not essential for the virus viability, but viral growth is affected when missing. In terms of biological role, structural peptide 3 is a small peptide derived from pVP2 C-terminus. It is not essential for the virus viability, but viral growth is affected when missing. This is Structural polyprotein from Infectious pancreatic necrosis virus (strain Sp) (IPNV).